The chain runs to 254 residues: Phosphate import ATP-binding protein PstB (254 aa).

An ABC transporter domain is found at 9–249 (MSVKDLDLFY…PVDKRTEDYI (241 aa)). 41-48 (GPSGCGKS) contacts ATP.

It belongs to the ABC transporter superfamily. Phosphate importer (TC 3.A.1.7) family. In terms of assembly, the complex is composed of two ATP-binding proteins (PstB), two transmembrane proteins (PstC and PstA) and a solute-binding protein (PstS).

Its subcellular location is the cell membrane. The enzyme catalyses phosphate(out) + ATP + H2O = ADP + 2 phosphate(in) + H(+). Functionally, part of the ABC transporter complex PstSACB involved in phosphate import. Responsible for energy coupling to the transport system. In Clostridioides difficile (strain 630) (Peptoclostridium difficile), this protein is Phosphate import ATP-binding protein PstB.